A 394-amino-acid polypeptide reads, in one-letter code: Bifunctional enzyme IspD/IspF (394 aa).

Positions 1 to 230 are 2-C-methyl-D-erythritol 4-phosphate cytidylyltransferase; it reads MADTLAIVVA…AEALLGGGPV (230 aa). A 2-C-methyl-D-erythritol 2,4-cyclodiphosphate synthase region spans residues 231–394; that stretch reads LVGFGYDVHR…RIVLPGDRVL (164 aa). 2 residues coordinate a divalent metal cation: aspartate 237 and histidine 239. Residues 237–239 and 263–264 each bind 4-CDP-2-C-methyl-D-erythritol 2-phosphate; these read DVH and HS. Histidine 271 lines the a divalent metal cation pocket. Residues 285–287, 290–294, 361–364, and phenylalanine 368 each bind 4-CDP-2-C-methyl-D-erythritol 2-phosphate; these read DIG, FPDDD, and TTTE.

It in the N-terminal section; belongs to the IspD/TarI cytidylyltransferase family. IspD subfamily. In the C-terminal section; belongs to the IspF family. It depends on a divalent metal cation as a cofactor.

It catalyses the reaction 2-C-methyl-D-erythritol 4-phosphate + CTP + H(+) = 4-CDP-2-C-methyl-D-erythritol + diphosphate. It carries out the reaction 4-CDP-2-C-methyl-D-erythritol 2-phosphate = 2-C-methyl-D-erythritol 2,4-cyclic diphosphate + CMP. Its pathway is isoprenoid biosynthesis; isopentenyl diphosphate biosynthesis via DXP pathway; isopentenyl diphosphate from 1-deoxy-D-xylulose 5-phosphate: step 2/6. The protein operates within isoprenoid biosynthesis; isopentenyl diphosphate biosynthesis via DXP pathway; isopentenyl diphosphate from 1-deoxy-D-xylulose 5-phosphate: step 4/6. Functionally, bifunctional enzyme that catalyzes the formation of 4-diphosphocytidyl-2-C-methyl-D-erythritol from CTP and 2-C-methyl-D-erythritol 4-phosphate (MEP) (IspD), and catalyzes the conversion of 4-diphosphocytidyl-2-C-methyl-D-erythritol 2-phosphate (CDP-ME2P) to 2-C-methyl-D-erythritol 2,4-cyclodiphosphate (ME-CPP) with a corresponding release of cytidine 5-monophosphate (CMP) (IspF). In Desulforudis audaxviator (strain MP104C), this protein is Bifunctional enzyme IspD/IspF.